The following is a 353-amino-acid chain: tRNA N6-adenosine threonylcarbamoyltransferase (353 aa).

Residues H109 and H113 each coordinate Fe cation. Substrate contacts are provided by residues T136–G140, D169, G182, D186, and N284. D312 provides a ligand contact to Fe cation.

The protein belongs to the KAE1 / TsaD family. It depends on Fe(2+) as a cofactor.

The protein resides in the cytoplasm. It catalyses the reaction L-threonylcarbamoyladenylate + adenosine(37) in tRNA = N(6)-L-threonylcarbamoyladenosine(37) in tRNA + AMP + H(+). In terms of biological role, required for the formation of a threonylcarbamoyl group on adenosine at position 37 (t(6)A37) in tRNAs that read codons beginning with adenine. Is involved in the transfer of the threonylcarbamoyl moiety of threonylcarbamoyl-AMP (TC-AMP) to the N6 group of A37, together with TsaE and TsaB. TsaD likely plays a direct catalytic role in this reaction. In Chlorobium phaeobacteroides (strain DSM 266 / SMG 266 / 2430), this protein is tRNA N6-adenosine threonylcarbamoyltransferase.